A 355-amino-acid polypeptide reads, in one-letter code: Heat-inducible transcription repressor HrcA (355 aa).

The protein belongs to the HrcA family.

Its function is as follows. Negative regulator of class I heat shock genes (grpE-dnaK-dnaJ and groELS operons). Prevents heat-shock induction of these operons. The sequence is that of Heat-inducible transcription repressor HrcA from Nitratidesulfovibrio vulgaris (strain DP4) (Desulfovibrio vulgaris).